The chain runs to 239 residues: Tungstate uptake system permease protein TupB (239 aa).

Residues 37–233 (IKTTLLSSSI…LIAFCLNFIT (197 aa)) form the ABC transmembrane type-1 domain. A run of 5 helical transmembrane segments spans residues 45 to 65 (SISI…LGFF), 76 to 96 (IVDT…YALI), 114 to 134 (LILG…SNLI), 168 to 188 (ISVV…AMIV), and 212 to 232 (FASG…LNFI).

This sequence belongs to the binding-protein-dependent transport system permease family. As to quaternary structure, the complex is composed of two ATP-binding proteins (TupC), two transmembrane proteins (TupB) and a solute-binding protein (TupA).

It is found in the cell inner membrane. In terms of biological role, part of an ABC transporter complex involved in ultra-high affinity tungstate uptake. Probably responsible for the translocation of the substrate across the membrane. The protein is Tungstate uptake system permease protein TupB of Campylobacter jejuni subsp. jejuni serotype O:2 (strain ATCC 700819 / NCTC 11168).